A 658-amino-acid chain; its full sequence is Methionine--tRNA ligase (658 aa).

Positions 9-19 match the 'HIGH' region motif; sequence PYANGKAHVGH. 4 residues coordinate Zn(2+): cysteine 140, cysteine 143, cysteine 152, and cysteine 156. The short motif at 322 to 326 is the 'KMSKS' region element; that stretch reads TFSKS. Residue lysine 325 coordinates ATP. Positions 558 to 658 constitute a tRNA-binding domain; sequence DFQKLDIRIG…KEVEPGTRVC (101 aa).

It belongs to the class-I aminoacyl-tRNA synthetase family. MetG type 1 subfamily. As to quaternary structure, homodimer. The cofactor is Zn(2+).

The protein resides in the cytoplasm. The catalysed reaction is tRNA(Met) + L-methionine + ATP = L-methionyl-tRNA(Met) + AMP + diphosphate. Functionally, is required not only for elongation of protein synthesis but also for the initiation of all mRNA translation through initiator tRNA(fMet) aminoacylation. This chain is Methionine--tRNA ligase, found in Archaeoglobus fulgidus (strain ATCC 49558 / DSM 4304 / JCM 9628 / NBRC 100126 / VC-16).